The chain runs to 334 residues: Leucine-rich repeat-containing protein 26 (334 aa).

A signal peptide spans 1–26; sequence MRGPSWSRPRPLLLLLLLLSPWPVWA. The Extracellular segment spans residues 27–261; that stretch reads QVSATASPSG…HCAQPLALRD (235 aa). The LRRNT domain maps to 34–71; sequence PSGSLGAPDCPEVCTCVPGGLASCSALSLPAVPPGLSL. Cystine bridges form between Cys43–Cys49 and Cys47–Cys57. LRR repeat units lie at residues 72–93, 96–117, 120–141, 144–167, and 168–190; these read RLRALLLDHNRVRALPPGAFAG, ALQRLDLRENGLHSVHVRAFWG, ALQLLDLSANQLEALAPGTFAP, ALRNLSLAGNRLARLEPAALGALP, and LLRSLSLQDNELAALAPGLLGRL. N-linked (GlcNAc...) asparagine glycosylation is present at Asn147. The 55-residue stretch at 201-255 folds into the LRRCT domain; it reads NPWGCGCALRPLCAWLRRHPLPASEAETVLCVWPGRLTLSPLTAFSDAAFSHCAQ. Disulfide bonds link Cys205/Cys231 and Cys207/Cys253. Residues 262–282 traverse the membrane as a helical segment; that stretch reads LAVVYTLGPASFLVSLASCLA. Residues 283-334 lie on the Cytoplasmic side of the membrane; that stretch reads LGSGLTACRARRRRLRTAALRPPRPPDPNPDPDPHGCASPADPGSPAAAAQA. Residues 298-334 are disordered; that stretch reads RTAALRPPRPPDPNPDPDPHGCASPADPGSPAAAAQA. The segment covering 304 to 313 has biased composition (pro residues); that stretch reads PPRPPDPNPD. A compositionally biased stretch (low complexity) spans 320-334; it reads ASPADPGSPAAAAQA.

As to quaternary structure, interacts with KCNMA1. Isoform 1 is expressed highly in normal prostate and salivary gland, very weakly in colon, pancreas, and intestine, and not at all in other tissues. Isoform 1 is expressed highly in many cancer cell lines and in breast cancer, pancreatic cancer and colon cancer. Isoform 2 is expressed in cancer cell lines.

It localises to the cell membrane. It is found in the cytoplasm. The protein resides in the cytoskeleton. Functionally, auxiliary protein of the large-conductance, voltage and calcium-activated potassium channel (BK alpha). Required for the conversion of BK alpha channels from a high-voltage to a low-voltage activated channel type in non-excitable cells. These are characterized by negative membrane voltages and constant low levels of calcium. The chain is Leucine-rich repeat-containing protein 26 (LRRC26) from Homo sapiens (Human).